The following is a 363-amino-acid chain: Caffeic acid 3-O-methyltransferase (363 aa).

130-136 provides a ligand contact to substrate; it reads MNQDKVL. Residues 162–180 form a substrate binding region; it reads AFEYHGKDPRFNKVFNQGM. 5 residues coordinate S-adenosyl-L-methionine: Gly-208, Asp-231, Asp-251, Met-252, and Lys-265. His-269 serves as the catalytic Proton acceptor.

The protein belongs to the class I-like SAM-binding methyltransferase superfamily. Cation-independent O-methyltransferase family. COMT subfamily. As to quaternary structure, homodimer.

The catalysed reaction is (E)-caffeate + S-adenosyl-L-methionine = (E)-ferulate + S-adenosyl-L-homocysteine + H(+). The protein operates within aromatic compound metabolism; phenylpropanoid biosynthesis. In terms of biological role, catalyzes the conversion of caffeic acid to ferulic acid and of 5-hydroxyferulic acid to sinapic acid. The resulting products may subsequently be converted to the corresponding alcohols that are incorporated into lignins. This Catharanthus roseus (Madagascar periwinkle) protein is Caffeic acid 3-O-methyltransferase (COMT1).